We begin with the raw amino-acid sequence, 251 residues long: Putative (5-formylfuran-3-yl)methyl phosphate synthase (251 aa).

The active-site Schiff-base intermediate with substrate is the K29. K87 serves as the catalytic Proton acceptor.

It belongs to the MfnB family.

The enzyme catalyses 2 D-glyceraldehyde 3-phosphate = 4-(hydroxymethyl)-2-furancarboxaldehyde phosphate + phosphate + 2 H2O. Functionally, catalyzes the formation of 4-(hydroxymethyl)-2-furancarboxaldehyde phosphate (4-HFC-P) from two molecules of glyceraldehyde-3-P (GA-3-P). This is Putative (5-formylfuran-3-yl)methyl phosphate synthase from Kitasatospora aureofaciens (Streptomyces aureofaciens).